The chain runs to 62 residues: uncharacterized protein (62 aa).

Positions 1–18 (MTTNRVDPLEQTSPNTPT) are enriched in polar residues. A disordered region spans residues 1–24 (MTTNRVDPLEQTSPNTPTSKREKA).

This is an uncharacterized protein from Rickettsia conorii (strain ATCC VR-613 / Malish 7).